Reading from the N-terminus, the 159-residue chain is 2-C-methyl-D-erythritol 2,4-cyclodiphosphate synthase (159 aa).

The a divalent metal cation site is built by aspartate 8 and histidine 10. 4-CDP-2-C-methyl-D-erythritol 2-phosphate is bound by residues 8–10 (DVH) and 34–35 (HS). Histidine 42 serves as a coordination point for a divalent metal cation. 4-CDP-2-C-methyl-D-erythritol 2-phosphate-binding positions include 56–58 (DIG), 61–65 (FPDTD), 100–106 (AQAPKML), 132–135 (TTTE), phenylalanine 139, and arginine 142.

It belongs to the IspF family. Homotrimer. The cofactor is a divalent metal cation.

The catalysed reaction is 4-CDP-2-C-methyl-D-erythritol 2-phosphate = 2-C-methyl-D-erythritol 2,4-cyclic diphosphate + CMP. The protein operates within isoprenoid biosynthesis; isopentenyl diphosphate biosynthesis via DXP pathway; isopentenyl diphosphate from 1-deoxy-D-xylulose 5-phosphate: step 4/6. Its function is as follows. Involved in the biosynthesis of isopentenyl diphosphate (IPP) and dimethylallyl diphosphate (DMAPP), two major building blocks of isoprenoid compounds. Catalyzes the conversion of 4-diphosphocytidyl-2-C-methyl-D-erythritol 2-phosphate (CDP-ME2P) to 2-C-methyl-D-erythritol 2,4-cyclodiphosphate (ME-CPP) with a corresponding release of cytidine 5-monophosphate (CMP). This is 2-C-methyl-D-erythritol 2,4-cyclodiphosphate synthase from Salmonella dublin (strain CT_02021853).